Reading from the N-terminus, the 173-residue chain is ATP synthase subunit b (173 aa).

Residues 15–35 (LYVGDMLFYAILFIVLMALIA) traverse the membrane as a helical segment.

It belongs to the ATPase B chain family. In terms of assembly, F-type ATPases have 2 components, F(1) - the catalytic core - and F(0) - the membrane proton channel. F(1) has five subunits: alpha(3), beta(3), gamma(1), delta(1), epsilon(1). F(0) has three main subunits: a(1), b(2) and c(10-14). The alpha and beta chains form an alternating ring which encloses part of the gamma chain. F(1) is attached to F(0) by a central stalk formed by the gamma and epsilon chains, while a peripheral stalk is formed by the delta and b chains.

The protein resides in the cell membrane. F(1)F(0) ATP synthase produces ATP from ADP in the presence of a proton or sodium gradient. F-type ATPases consist of two structural domains, F(1) containing the extramembraneous catalytic core and F(0) containing the membrane proton channel, linked together by a central stalk and a peripheral stalk. During catalysis, ATP synthesis in the catalytic domain of F(1) is coupled via a rotary mechanism of the central stalk subunits to proton translocation. Functionally, component of the F(0) channel, it forms part of the peripheral stalk, linking F(1) to F(0). The protein is ATP synthase subunit b of Pediococcus pentosaceus (strain ATCC 25745 / CCUG 21536 / LMG 10740 / 183-1w).